A 390-amino-acid chain; its full sequence is E3 ubiquitin-protein ligase At4g11680 (390 aa).

The segment covering Met-1–Ser-19 has biased composition (low complexity). A disordered region spans residues Met-1 to Leu-39. 5 helical membrane-spanning segments follow: residues Val-109 to Ile-129, Val-142 to Tyr-162, Met-212 to Leu-232, Ile-244 to Ile-264, and Gly-265 to Gln-285. Residues Cys-338–Lys-379 form an RING-type; atypical zinc finger.

It localises to the membrane. The enzyme catalyses S-ubiquitinyl-[E2 ubiquitin-conjugating enzyme]-L-cysteine + [acceptor protein]-L-lysine = [E2 ubiquitin-conjugating enzyme]-L-cysteine + N(6)-ubiquitinyl-[acceptor protein]-L-lysine.. Its pathway is protein modification; protein ubiquitination. Functionally, mediates E2-dependent protein ubiquitination in vitro. This is E3 ubiquitin-protein ligase At4g11680 from Arabidopsis thaliana (Mouse-ear cress).